We begin with the raw amino-acid sequence, 415 residues long: Alpha-1,3/1,6-mannosyltransferase ALG2 (415 aa).

Residues Met1–Arg84 lie on the Cytoplasmic side of the membrane. The segment at residues Gly85 to Ser105 is an intramembrane region (helical). Residues Gly106 to Val415 are Cytoplasmic-facing.

Belongs to the glycosyltransferase group 1 family. Glycosyltransferase 4 subfamily.

It is found in the endoplasmic reticulum membrane. It carries out the reaction a beta-D-Man-(1-&gt;4)-beta-D-GlcNAc-(1-&gt;4)-alpha-D-GlcNAc-diphospho-di-trans,poly-cis-dolichol + GDP-alpha-D-mannose = an alpha-D-Man-(1-&gt;3)-beta-D-Man-(1-&gt;4)-beta-D-GlcNAc-(1-&gt;4)-alpha-D-GlcNAc-diphospho-di-trans,poly-cis-dolichol + GDP + H(+). The enzyme catalyses an alpha-D-Man-(1-&gt;3)-beta-D-Man-(1-&gt;4)-beta-D-GlcNAc-(1-&gt;4)-alpha-D-GlcNAc-diphospho-di-trans,poly-cis-dolichol + GDP-alpha-D-mannose = an alpha-D-Man-(1-&gt;3)-[alpha-D-Man-(1-&gt;6)]-beta-D-Man-(1-&gt;4)-beta-D-GlcNAc-(1-&gt;4)-alpha-D-GlcNAc-diphospho-di-trans,poly-cis-dolichol + GDP + H(+). The catalysed reaction is a beta-D-Man-(1-&gt;4)-beta-D-GlcNAc-(1-&gt;4)-alpha-D-GlcNAc-diphospho-di-trans,poly-cis-dolichol + GDP-alpha-D-mannose = an alpha-D-Man-(1-&gt;6)-beta-D-Man-(1-&gt;4)-beta-D-GlcNAc-(1-&gt;4)-alpha-D-GlcNAc-diphospho-di-trans,poly-cis-dolichol + GDP + H(+). It catalyses the reaction an alpha-D-Man-(1-&gt;6)-beta-D-Man-(1-&gt;4)-beta-D-GlcNAc-(1-&gt;4)-alpha-D-GlcNAc-diphospho-di-trans,poly-cis-dolichol + GDP-alpha-D-mannose = an alpha-D-Man-(1-&gt;3)-[alpha-D-Man-(1-&gt;6)]-beta-D-Man-(1-&gt;4)-beta-D-GlcNAc-(1-&gt;4)-alpha-D-GlcNAc-diphospho-di-trans,poly-cis-dolichol + GDP + H(+). Its pathway is protein modification; protein glycosylation. Its function is as follows. Mannosyltransferase that operates in the biosynthetic pathway of dolichol-linked oligosaccharides, the glycan precursors employed in protein asparagine (N)-glycosylation. The assembly of dolichol-linked oligosaccharides begins on the cytosolic side of the endoplasmic reticulum membrane and finishes in its lumen. The sequential addition of sugars to dolichol pyrophosphate produces dolichol-linked oligosaccharides containing fourteen sugars, including two GlcNAcs, nine mannoses and three glucoses. Once assembled, the oligosaccharide is transferred from the lipid to nascent proteins by oligosaccharyltransferases. Catalyzes, on the cytoplasmic face of the endoplasmic reticulum, the addition of the second and third mannose residues to the dolichol-linked oligosaccharide chain, to produce Man3GlcNAc(2)-PP-dolichol core oligosaccharide. Man3GlcNAc(2)-PP-dolichol is a substrate for ALG11, the following enzyme in the biosynthetic pathway. While both alpha 1,3 and alpha 1,6 linkages are possible, the sequential addition of alpha 1,3 followed by alpha 1,6 is probably the preferred route. This is Alpha-1,3/1,6-mannosyltransferase ALG2 (Alg2) from Mus musculus (Mouse).